The sequence spans 357 residues: U5 small nuclear ribonucleoprotein 40 kDa protein (357 aa).

K18 is covalently cross-linked (Glycyl lysine isopeptide (Lys-Gly) (interchain with G-Cter in SUMO2)). R21 carries the post-translational modification Asymmetric dimethylarginine. WD repeat units follow at residues G64–A103, G107–R146, G149–T189, Q191–T230, G233–R272, N283–K322, and G325–Q357. Residue K270 forms a Glycyl lysine isopeptide (Lys-Gly) (interchain with G-Cter in SUMO2) linkage.

In terms of assembly, component of the pre-catalytic and catalytic spliceosome complexes. Component of the postcatalytic spliceosome P complex. Part of the U5 snRNP complex. Interacts with PRPF8. Component of the U4/U6-U5 tri-snRNP complex composed of the U4, U6 and U5 snRNAs and at least PRPF3, PRPF4, PRPF6, PRPF8, PRPF31, SNRNP200, TXNL4A, WDR57, SNRNP40, DDX23, CD2BP2, PPIH, SNU13, EFTUD2, SART1 and USP39. Component of the minor spliceosome, which splices U12-type introns.

Its subcellular location is the nucleus. Functionally, required for pre-mRNA splicing as component of the activated spliceosome. Component of the U5 small nuclear ribonucleoprotein (snRNP) complex and the U4/U6-U5 tri-snRNP complex, building blocks of the spliceosome. As a component of the minor spliceosome, involved in the splicing of U12-type introns in pre-mRNAs. This is U5 small nuclear ribonucleoprotein 40 kDa protein (SNRNP40) from Pongo abelii (Sumatran orangutan).